A 95-amino-acid chain; its full sequence is Membrane protein insertion and folding monitor (95 aa).

A helical transmembrane segment spans residues 12-32 (LFLVDFFTIILPALTAIGIAF). The interval 86-89 (DEED) is crucial for elongation arrest.

It localises to the cell membrane. Functionally, sensor protein that up-regulates translation of the secondary membrane protein insertase (MisCB/YqjG) when activity of the primary membrane protein insertase (MisCA/SpoIIIJ) is limited. Acts as a ribosome-nascent chain complex. When the primary membrane protein insertase activity or level is reduced, the membrane insertion of MifM is impaired, which induces arrest of MifM translation and unfolding of the mRNA hairpin. Unfolding leads to translation of the downstream gene, which encodes the secondary membrane protein insertase MisCB/YqjG. Translation arrest of MifM is mediated by interaction of its C-terminal domain with the ribosomal polypeptide exit tunnel. Undergoes multisite stalling, which may allow a sufficient duration of ribosomal stalling and consequently sufficient levels of MisCB/YqjG. The protein is Membrane protein insertion and folding monitor (mifM) of Bacillus subtilis (strain 168).